A 60-amino-acid polypeptide reads, in one-letter code: Large ribosomal subunit protein bL32 (60 aa).

The disordered stretch occupies residues 1–21; sequence MAVPRNRHSNARKNIRRSHDA.

This sequence belongs to the bacterial ribosomal protein bL32 family.

The chain is Large ribosomal subunit protein bL32 from Chlamydia felis (strain Fe/C-56) (Chlamydophila felis).